Here is a 36-residue protein sequence, read N- to C-terminus: Beta/delta/mu-theraphotoxin-Pv1 (36 aa).

3 disulfide bridges follow: Cys3–Cys17, Cys10–Cys22, and Cys16–Cys30. Phe36 is subject to Phenylalanine amide.

Belongs to the neurotoxin 10 (Hwtx-1) family. As to expression, expressed by the venom gland.

It is found in the secreted. Gating-modifier toxin that targets voltage-gated sodium channels. Inhibits the inactivation of Nav1.7/SCN9A. This is Beta/delta/mu-theraphotoxin-Pv1 from Poecilotheria vittata (Ghost ornamental tarantula).